The chain runs to 243 residues: Probable sentrin-specific protease 8 (243 aa).

The protease stretch occupies residues 12-185 (SAIYQSDINI…LYVLSIIEEL (174 aa)). Residues H109 and D126 contribute to the active site. The Nucleophile role is filled by C174.

The protein belongs to the peptidase C48 family.

Functionally, protease that catalyzes two essential functions in the nedd8 pathway: processing of full-length nedd8 to its mature form and deconjugation of nedd8 from targeted proteins. The polypeptide is Probable sentrin-specific protease 8 (senp8) (Dictyostelium discoideum (Social amoeba)).